The chain runs to 844 residues: Protein translocase subunit SecA (844 aa).

ATP is bound by residues glutamine 87, 105–109 (GEGKT), and aspartate 495. Residues 783-800 (QAPPEELKQEFKHKEEPK) are compositionally biased toward basic and acidic residues. Residues 783-844 (QAPPEELKQE…GQKYKKCCGA (62 aa)) form a disordered region. Positions 802-811 (LNYSGAQKET) are enriched in polar residues. Residues 816–826 (PERRGEPKVGR) are compositionally biased toward basic and acidic residues. The Zn(2+) site is built by cysteine 830, cysteine 832, cysteine 841, and cysteine 842.

It belongs to the SecA family. As to quaternary structure, monomer and homodimer. Part of the essential Sec protein translocation apparatus which comprises SecA, SecYEG and auxiliary proteins SecDF-YajC and YidC. It depends on Zn(2+) as a cofactor.

It localises to the cell inner membrane. Its subcellular location is the cytoplasm. It carries out the reaction ATP + H2O + cellular proteinSide 1 = ADP + phosphate + cellular proteinSide 2.. Its function is as follows. Part of the Sec protein translocase complex. Interacts with the SecYEG preprotein conducting channel. Has a central role in coupling the hydrolysis of ATP to the transfer of proteins into and across the cell membrane, serving as an ATP-driven molecular motor driving the stepwise translocation of polypeptide chains across the membrane. This is Protein translocase subunit SecA from Nitratidesulfovibrio vulgaris (strain DSM 19637 / Miyazaki F) (Desulfovibrio vulgaris).